Reading from the N-terminus, the 1099-residue chain is Transmembrane protein 132D (1099 aa).

The first 30 residues, Met-1–Gly-30, serve as a signal peptide directing secretion. Over Arg-31–Asp-915 the chain is Extracellular. Asn-505 is a glycosylation site (N-linked (GlcNAc...) asparagine). The segment at Phe-797–Asp-858 is disordered. The segment covering Gly-835–Gly-848 has biased composition (low complexity). A helical transmembrane segment spans residues Leu-916 to Ile-936. At Asn-937–Val-1099 the chain is on the cytoplasmic side.

This sequence belongs to the TMEM132 family. In terms of assembly, interacts (via C-terminus) with NCKAP. In terms of tissue distribution, expressed in mature oligodendrocytes. Detected in the brain, lung, pancreas and testis. Highly expressed in mature neurons of the adult nervous system.

The protein localises to the membrane. In terms of biological role, regulate neuronals morphology via inhibition of the WAVE regulatory complex (WCR), a complex that controls F-actin cytoskeletal dynamics. This chain is Transmembrane protein 132D, found in Homo sapiens (Human).